Consider the following 314-residue polypeptide: tRNA dimethylallyltransferase (314 aa).

12 to 19 (GPTASGKT) serves as a coordination point for ATP. Residue 14–19 (TASGKT) participates in substrate binding. Interaction with substrate tRNA stretches follow at residues 37–40 (DSAL) and 162–166 (QRIIR).

This sequence belongs to the IPP transferase family. In terms of assembly, monomer. It depends on Mg(2+) as a cofactor.

The catalysed reaction is adenosine(37) in tRNA + dimethylallyl diphosphate = N(6)-dimethylallyladenosine(37) in tRNA + diphosphate. Its function is as follows. Catalyzes the transfer of a dimethylallyl group onto the adenine at position 37 in tRNAs that read codons beginning with uridine, leading to the formation of N6-(dimethylallyl)adenosine (i(6)A). The protein is tRNA dimethylallyltransferase of Acinetobacter baumannii (strain AB0057).